Reading from the N-terminus, the 544-residue chain is Chaperonin GroEL (544 aa).

ATP is bound by residues 29-32 (TLGP), 86-90 (DGTTT), Gly-413, 476-478 (NAA), and Asp-492.

The protein belongs to the chaperonin (HSP60) family. Forms a cylinder of 14 subunits composed of two heptameric rings stacked back-to-back. Interacts with the co-chaperonin GroES.

Its subcellular location is the cytoplasm. The catalysed reaction is ATP + H2O + a folded polypeptide = ADP + phosphate + an unfolded polypeptide.. In terms of biological role, together with its co-chaperonin GroES, plays an essential role in assisting protein folding. The GroEL-GroES system forms a nano-cage that allows encapsulation of the non-native substrate proteins and provides a physical environment optimized to promote and accelerate protein folding. This Bacillus cereus (strain G9842) protein is Chaperonin GroEL.